A 215-amino-acid chain; its full sequence is Pyridoxine/pyridoxamine 5'-phosphate oxidase (215 aa).

Substrate is bound by residues Arg-9–Tyr-12 and Lys-69. Residues Arg-64–Lys-69, Phe-79–Thr-80, Lys-86, and Gln-108 each bind FMN. Tyr-126, Arg-130, and Ser-134 together coordinate substrate. Residues Gln-143–Ser-144 and Trp-188 each bind FMN. Substrate is bound at residue Arg-194–His-196. Arg-198 is a binding site for FMN.

It belongs to the pyridoxamine 5'-phosphate oxidase family. As to quaternary structure, homodimer. FMN is required as a cofactor.

It carries out the reaction pyridoxamine 5'-phosphate + O2 + H2O = pyridoxal 5'-phosphate + H2O2 + NH4(+). It catalyses the reaction pyridoxine 5'-phosphate + O2 = pyridoxal 5'-phosphate + H2O2. The protein operates within cofactor metabolism; pyridoxal 5'-phosphate salvage; pyridoxal 5'-phosphate from pyridoxamine 5'-phosphate: step 1/1. It functions in the pathway cofactor metabolism; pyridoxal 5'-phosphate salvage; pyridoxal 5'-phosphate from pyridoxine 5'-phosphate: step 1/1. Catalyzes the oxidation of either pyridoxine 5'-phosphate (PNP) or pyridoxamine 5'-phosphate (PMP) into pyridoxal 5'-phosphate (PLP). The polypeptide is Pyridoxine/pyridoxamine 5'-phosphate oxidase (Pseudomonas fluorescens (strain Pf0-1)).